The chain runs to 569 residues: AA9 family lytic polysaccharide monooxygenase A (569 aa).

The N-terminal stretch at methionine 1–glycine 16 is a signal peptide. The Cu(2+) site is built by histidine 17 and histidine 99. Cysteine 59 and cysteine 189 are joined by a disulfide. A glycan (N-linked (GlcNAc...) asparagine) is linked at asparagine 112. Histidine 174 and glutamine 184 together coordinate O2. Residue tyrosine 186 participates in Cu(2+) binding. N-linked (GlcNAc...) asparagine glycosylation is found at asparagine 244 and asparagine 381. Residues alanine 399 to threonine 424 are compositionally biased toward low complexity. The interval alanine 399 to glycine 439 is disordered. The N-linked (GlcNAc...) asparagine glycan is linked to asparagine 472.

The protein belongs to the polysaccharide monooxygenase AA9 family. It depends on Cu(2+) as a cofactor.

The protein resides in the secreted. The enzyme catalyses [(1-&gt;4)-beta-D-glucosyl]n+m + reduced acceptor + O2 = 4-dehydro-beta-D-glucosyl-[(1-&gt;4)-beta-D-glucosyl]n-1 + [(1-&gt;4)-beta-D-glucosyl]m + acceptor + H2O.. Functionally, lytic polysaccharide monooxygenase (LPMO) that depolymerizes crystalline and amorphous polysaccharides via the oxidation of scissile alpha- or beta-(1-4)-glycosidic bonds, yielding C4 oxidation products. Catalysis by LPMOs requires the reduction of the active-site copper from Cu(II) to Cu(I) by a reducing agent and H(2)O(2) or O(2) as a cosubstrate. This Emericella nidulans (strain FGSC A4 / ATCC 38163 / CBS 112.46 / NRRL 194 / M139) (Aspergillus nidulans) protein is AA9 family lytic polysaccharide monooxygenase A.